A 559-amino-acid chain; its full sequence is Formate--tetrahydrofolate ligase (559 aa).

Residue 68 to 75 coordinates ATP; it reads TPAGEGKT.

Belongs to the formate--tetrahydrofolate ligase family. As to quaternary structure, homotetramer.

It catalyses the reaction (6S)-5,6,7,8-tetrahydrofolate + formate + ATP = (6R)-10-formyltetrahydrofolate + ADP + phosphate. It participates in one-carbon metabolism; tetrahydrofolate interconversion. The protein is Formate--tetrahydrofolate ligase of Moorella thermoacetica (Clostridium thermoaceticum).